The chain runs to 243 residues: LexA repressor (243 aa).

Residues 1-30 are disordered; the sequence is MSDDTGEFTDGSTESPADADGAGRRRAVDN. Over residues 21–30 the composition is skewed to basic and acidic residues; sequence GAGRRRAVDN. Residues 56–76 constitute a DNA-binding region (H-T-H motif); the sequence is IREIGDAVGLTSTSSVAHQLR. Catalysis depends on for autocatalytic cleavage activity residues serine 167 and lysine 204.

It belongs to the peptidase S24 family. In terms of assembly, homodimer.

It carries out the reaction Hydrolysis of Ala-|-Gly bond in repressor LexA.. Represses a number of genes involved in the response to DNA damage (SOS response), including recA and lexA. In the presence of single-stranded DNA, RecA interacts with LexA causing an autocatalytic cleavage which disrupts the DNA-binding part of LexA, leading to derepression of the SOS regulon and eventually DNA repair. The chain is LexA repressor from Mycolicibacterium smegmatis (strain ATCC 700084 / mc(2)155) (Mycobacterium smegmatis).